We begin with the raw amino-acid sequence, 906 residues long: Peroxisomal hydratase-dehydrogenase-epimerase (906 aa).

2 short-chain dehydrogenase like regions span residues 5–228 (DFKD…SSAE) and 319–532 (SLKD…GTDD). NADP(+) is bound by residues I13, K52, N98, and K131. Catalysis depends on proton donor residues S149 and Y163. Positions 163 and 167 each coordinate NADP(+). The Proton acceptor role is filled by Y163. K167 (lowers pKa of active site Tyr) is an active-site residue. Catalysis depends on Y467, which acts as the Proton acceptor. A disordered region spans residues 600–633 (AVGGDDDDDDEDEEEDEGDEEEDEEDEEEDDPVW). Residues 603–630 (GDDDDDDEDEEEDEGDEEEDEEDEEEDD) are compositionally biased toward acidic residues. (3R)-3-hydroxydecanoyl-CoA-binding residues include H699, G700, K729, Y757, D808, N810, G831, F856, T857, and G858. The MaoC-like domain maps to 782-893 (APKRAPDYQV…VVDRGTIAIN (112 aa)). A Microbody targeting signal motif is present at residues 904-906 (AKI).

This sequence belongs to the short-chain dehydrogenases/reductases (SDR) family. In terms of assembly, monomer.

The protein resides in the peroxisome. It catalyses the reaction a (3R)-3-hydroxyacyl-CoA = a (2E)-enoyl-CoA + H2O. The enzyme catalyses a (3R)-3-hydroxyacyl-CoA + NAD(+) = a 3-oxoacyl-CoA + NADH + H(+). Its pathway is lipid metabolism; fatty acid beta-oxidation. Its function is as follows. Second trifunctional enzyme acting on the beta-oxidation pathway for fatty acids, possessing hydratase-dehydrogenase-epimerase activities. Converts trans-2-enoyl-CoA via D-3-hydroxyacyl-CoA to 3-ketoacyl-CoA. This chain is Peroxisomal hydratase-dehydrogenase-epimerase, found in Candida tropicalis (Yeast).